Reading from the N-terminus, the 343-residue chain is CCN family member 3 (343 aa).

An N-terminal signal peptide occupies residues 1–18 (MTPHLALCFILLIQQVAS). The region spanning 19–90 (QKCPSQCDQC…RMETGTCMAL (72 aa)) is the IGFBP N-terminal domain. Cystine bridges form between C21/C46, C25/C48, C28/C49, C35/C52, C60/C74, and C66/C87. In terms of domain architecture, VWFC spans 93 to 159 (NSCVFDGVVY…GECCEKWVCD (67 aa)). The TSP type-1 domain maps to 190–235 (ACIAQTTEWSACSKTCGMGVSSRVTNRNARCEMQKQIRLCMVRSCE). 5 disulfide bridges follow: C249–C286, C266–C300, C277–C316, C280–C318, and C285–C322. In terms of domain architecture, CTCK spans 249–323 (CVRVRKTTKP…STCVCHYNCP (75 aa)). An N-linked (GlcNAc...) asparagine glycan is attached at N265.

Belongs to the CCN family.

The protein resides in the secreted. The protein localises to the cytoplasm. It localises to the cell junction. Its subcellular location is the gap junction. Functionally, immediate-early protein playing a role in various cellular processes including proliferation, adhesion, migration, differentiation and survival. Acts by binding to integrins or membrane receptors such as NOTCH1. This chain is CCN family member 3 (ccn3), found in Xenopus laevis (African clawed frog).